We begin with the raw amino-acid sequence, 440 residues long: Chromosome partition protein MukF (440 aa).

Residues 208 to 236 are leucine-zipper; it reads LSETSGTLRELQDTLEAAGDKLQANLLRI.

This sequence belongs to the MukF family. Interacts, and probably forms a ternary complex, with MukE and MukB via its C-terminal region. The complex formation is stimulated by calcium or magnesium. It is required for an interaction between MukE and MukB.

The protein localises to the cytoplasm. It is found in the nucleoid. Its function is as follows. Involved in chromosome condensation, segregation and cell cycle progression. May participate in facilitating chromosome segregation by condensation DNA from both sides of a centrally located replisome during cell division. Not required for mini-F plasmid partitioning. Probably acts via its interaction with MukB and MukE. Overexpression results in anucleate cells. It has a calcium binding activity. The chain is Chromosome partition protein MukF from Escherichia fergusonii (strain ATCC 35469 / DSM 13698 / CCUG 18766 / IAM 14443 / JCM 21226 / LMG 7866 / NBRC 102419 / NCTC 12128 / CDC 0568-73).